A 243-amino-acid polypeptide reads, in one-letter code: MTTNPKPVYQRILLKLSGEALQGEEGFGIDPATLDRMAQEVKELIELGVQVGVVIGGGNLFRGAGLAEAGMNRVVGDHMGMLATVMNGLAMRDALHRAYVNARVMSAIPLKGVCDDYNWADAIAQLRQGRVVIFSAGTGNPFFTTDSAACLRGIEIEADVVLKATKVDGVFTADPVSNPDAELYDKLSYSSVLEKELKVMDLAAFTLARDHNMPIRVFNMNKPGALRRVVMGETEGTLISNAE.

15–18 (KLSG) serves as a coordination point for ATP. The involved in allosteric activation by GTP stretch occupies residues 23–28 (GEEGFG). UMP is bound at residue Gly57. Residues Gly58 and Arg62 each contribute to the ATP site. UMP contacts are provided by residues Asp77 and 138-145 (TGNPFFTT). The ATP site is built by Thr165, Phe171, and Asp174.

Belongs to the UMP kinase family. As to quaternary structure, homohexamer.

It is found in the cytoplasm. It carries out the reaction UMP + ATP = UDP + ADP. It functions in the pathway pyrimidine metabolism; CTP biosynthesis via de novo pathway; UDP from UMP (UMPK route): step 1/1. Allosterically activated by GTP. Inhibited by UTP. Catalyzes the reversible phosphorylation of UMP to UDP. The protein is Uridylate kinase of Aliivibrio fischeri (strain ATCC 700601 / ES114) (Vibrio fischeri).